We begin with the raw amino-acid sequence, 444 residues long: Transcription factor PIF5 (444 aa).

The segment at glutamate 26 to valine 39 is involved in interaction with phyB. Disordered regions lie at residues histidine 154–glutamate 265 and methionine 416–glycine 444. The segment covering cysteine 155 to valine 171 has biased composition (polar residues). Over residues aspartate 175–aspartate 185 the composition is skewed to basic and acidic residues. The span at serine 187–glycine 197 shows a compositional bias: low complexity. Residues glutamate 224–lysine 244 show a composition bias toward polar residues. Residues arginine 256–glutamate 265 show a composition bias toward basic and acidic residues. One can recognise a bHLH domain in the interval arginine 256–leucine 305. A compositionally biased stretch (polar residues) spans glycine 424 to serine 437. Serine 437 carries the post-translational modification Phosphoserine.

Homodimer. Interacts specifically with the Pfr form of phytochrome B and with TOC1/APRR1. May form a heterodimer with PIF3. Interacts with PHYB, CRY1 and CRY2 in the nucleus in response to low blue light (LBL). Interacts with TOPP4. Associates to PTAC12/HMR/PAP5 which acts as a transcriptional coactivator. In terms of processing, phosphorylated. Additional phosphorylations induced within 60 seconds following phytochrome B photoactivation. Post-translationally, dephosphorylated by TOPP4 during photomorphogenesis, leading to subsequent degradation of PIF5 by the proteasomal pathway. Mainly expressed in leaves and seedlings, and, to a lower extent, in stems, fruits, flowers and roots.

It is found in the nucleus. Its function is as follows. Transcription factor acting negatively in the phytochrome B signaling pathway to promote the shade-avoidance response. Regulates PHYB abundance at the post-transcriptional level, possibly via the ubiquitin-proteasome pathway. Promotes ethylene activity in the dark. May regulate the expression of a subset of genes by binding to the G-box motif. Might be involved in the integration of light-signals to control both circadian and photomorphogenic processes. Activated by CRY1 and CRY2 in response to low blue light (LBL) by direct binding at chromatin on E-box variant 5'-CA[CT]GTG-3' to stimulate specific gene expression to adapt global physiology (e.g. hypocotyl elongation in low blue light). The protein is Transcription factor PIF5 of Arabidopsis thaliana (Mouse-ear cress).